Here is a 357-residue protein sequence, read N- to C-terminus: MSKCGRKKYMRTNVRQMTMETVESQQDRSVTHSVAEHSSAHMQTGQISVPTLAQVSVAGSGTGRGSPAVTLVQLPSGQTVQVQGVIQTPHPSVIQSPQIQTVQVATIAETDDSADSEVIDSHKRREILSRRPSYRKILNELSSDVPGIPKIEEEKSEEEGTPPNIATMAVPTSIYQTSTGQYIAIAQGGTIQISNPGSDGVQGLQALTMTNSGAPPPGATIVQYAAQSADGTQQFFVPGSQVVVQDEETDLAPSHMAAATGDMPTYQIRAPTTALPQGVVMAASPGSLHSPQQLAEEATRKRELRLMKNREAAKECRRRKKEYVKCLESRVAVLEVQNKKLIEELETLKDICSPKTD.

The KID domain maps to 101 to 160 (TVQVATIAETDDSADSEVIDSHKRREILSRRPSYRKILNELSSDVPGIPKIEEEKSEEEG). Phosphoserine occurs at positions 116, 142, 284, 287, and 290. One can recognise a bZIP domain in the interval 299–357 (TRKRELRLMKNREAAKECRRRKKEYVKCLESRVAVLEVQNKKLIEELETLKDICSPKTD). A basic motif region spans residues 300–325 (RKRELRLMKNREAAKECRRRKKEYVK). The tract at residues 327–348 (LESRVAVLEVQNKKLIEELETL) is leucine-zipper.

The protein belongs to the bZIP family. Binds DNA as a dimer. Interacts with CDC34. Interacts with FHL5. Isoform delta forms a heterodimer with CREB3L4. May interact with TSSK4. Stimulated by phosphorylation. Phosphorylated on Ser-116 by TSSK4 in vitro. Post-translationally, ubiquitinated by CDC34 and RAD6B in order to be degraded by the proteasome. Isoform Tau is expressed in testis germ cells. CREM-theta1- and CREM-theta2-containing isoforms are expressed in testis.

The protein resides in the nucleus. Its function is as follows. Transcriptional regulator that binds the cAMP response element (CRE), a sequence present in many viral and cellular promoters. Isoforms are either transcriptional activators or repressors. Isoform Delta is an activator. Plays a role in spermatogenesis and is involved in spermatid maturation. Binding of isoform Tau (activator) to CRE is increased by CREB3L4. The CREM isoform Tau-CREB3L4 heterodimer functions through CRE and may recruit HIRA to CRE to regulate histone exchange. This chain is cAMP-responsive element modulator (Crem), found in Rattus norvegicus (Rat).